Reading from the N-terminus, the 152-residue chain is 3-dehydroquinate dehydratase (152 aa).

The active-site Proton acceptor is Tyr-26. Asn-77, His-83, and Asp-90 together coordinate substrate. Catalysis depends on His-103, which acts as the Proton donor. Residues 104-105 (LS) and Arg-114 contribute to the substrate site.

This sequence belongs to the type-II 3-dehydroquinase family. As to quaternary structure, homododecamer.

The catalysed reaction is 3-dehydroquinate = 3-dehydroshikimate + H2O. It participates in metabolic intermediate biosynthesis; chorismate biosynthesis; chorismate from D-erythrose 4-phosphate and phosphoenolpyruvate: step 3/7. In terms of biological role, catalyzes a trans-dehydration via an enolate intermediate. The polypeptide is 3-dehydroquinate dehydratase (Tolumonas auensis (strain DSM 9187 / NBRC 110442 / TA 4)).